Reading from the N-terminus, the 229-residue chain is Enolase-phosphatase E1 (229 aa).

The protein belongs to the HAD-like hydrolase superfamily. MasA/MtnC family. As to quaternary structure, monomer. Mg(2+) serves as cofactor.

The catalysed reaction is 5-methylsulfanyl-2,3-dioxopentyl phosphate + H2O = 1,2-dihydroxy-5-(methylsulfanyl)pent-1-en-3-one + phosphate. It participates in amino-acid biosynthesis; L-methionine biosynthesis via salvage pathway; L-methionine from S-methyl-5-thio-alpha-D-ribose 1-phosphate: step 3/6. Its pathway is amino-acid biosynthesis; L-methionine biosynthesis via salvage pathway; L-methionine from S-methyl-5-thio-alpha-D-ribose 1-phosphate: step 4/6. Functionally, bifunctional enzyme that catalyzes the enolization of 2,3-diketo-5-methylthiopentyl-1-phosphate (DK-MTP-1-P) into the intermediate 2-hydroxy-3-keto-5-methylthiopentenyl-1-phosphate (HK-MTPenyl-1-P), which is then dephosphorylated to form the acireductone 1,2-dihydroxy-3-keto-5-methylthiopentene (DHK-MTPene). The chain is Enolase-phosphatase E1 from Enterobacter sp. (strain 638).